Here is a 451-residue protein sequence, read N- to C-terminus: Type 3 secretion system ATPase (451 aa).

Position 184–189 (184–189) interacts with ATP; sequence GGGKST.

The protein belongs to the ATPase alpha/beta chains family. T3SS ATPase subfamily. The core secretion machinery of the T3SS is composed of approximately 20 different proteins, including cytoplasmic components, a base, an export apparatus and a needle. This subunit is part of the cytosolic complex. Forms homohexamers.

It is found in the cytoplasm. The enzyme catalyses ATP + H2O + cellular proteinSide 1 = ADP + phosphate + cellular proteinSide 2.. In terms of biological role, ATPase component of the type III secretion system (T3SS), also called injectisome, which is used to inject bacterial effector proteins into eukaryotic host cells. Acts as a molecular motor to provide the energy that is required for the export of proteins. Required for type III secretion apparatus (T3SA) formation, proper protein secretion, host cell invasion and virulence. May play a critical role in T3SS substrate recognition, disassembly of the effector/chaperone complex and unfolding of the effector in an ATP-dependent manner prior to secretion. In Sinorhizobium fredii (strain NBRC 101917 / NGR234), this protein is Type 3 secretion system ATPase.